A 544-amino-acid polypeptide reads, in one-letter code: Cytochrome P450 monooxygenase cle2 (544 aa).

A helical membrane pass occupies residues 19–39 (LGLLIGLSLILSITWTAYTIL). Residues 273 to 305 (RTQQVEQSIEKNTKNEKKEDEDEDQNEDEETPG) are disordered. Over residues 280–290 (SIEKNTKNEKK) the composition is skewed to basic and acidic residues. A compositionally biased stretch (acidic residues) spans 291–304 (EDEDEDQNEDEETP). Cys-478 serves as a coordination point for heme.

This sequence belongs to the cytochrome P450 family. The cofactor is heme.

It localises to the membrane. Its pathway is secondary metabolite biosynthesis; terpenoid biosynthesis. Functionally, cytochrome P450 monooxygenase; part of the cluster A that mediates the biosynthesis of chevalone E and its oxidized derivatives that possess a unique five-membered lactone ring and can synergistically enhance the cytotoxicity of doxorubicin (DOX) in breast cancer cells. Within the pathway, cle2 is involved in hydroxylation of the chavalone E scaffold at position C-20 and contributes with cle4 to the production of seven oxidation derivatives. The molecular scaffold is commonly biosynthesized by a series of enzymes including the non-reducing polyketide synthase (NR-PKS) cle1 that produces the alpha-pyrone triacetic acid lactone (TAL); The membrane-bound prenyltransferase cle5 that accepts TAL as its substrate to perform a C-3 geranylgeranylation reaction, in which the pathway-dedicated GGPS cle6 is required to provide GGPP, the other substrate of cle5; the FAD-dependent monooxygenase Cle3 that forms an (S)-epoxide ring at the terminal olefin of the geranylgeranyl group; and the terpene cyclase Cle7 that catalyzes the cyclization of the prenyl group that yields the pentacyclic pathway intermediate chevalone E. Chevalone E can derivatize into seven new oxidized analogs by the cytochrome P450 monooxygenases cle2 (acting at C-20) and cle4 (acting at C-11 and C-12). This is Cytochrome P450 monooxygenase cle2 from Aspergillus versicolor.